A 382-amino-acid chain; its full sequence is KCRIIREFPDIVFKGLTLVQVSQKFGKAGFEDVKKVTEEIVHLNEDCCKGDAVECMMERMEATDHICEAKDKLSSKLADCCAKSILERTPCLLALPNDESDLSKELKNYYEDERVCENYKKDKLLFLAHFTHDYARSHQESSPQSCLRVSKGFEGLLEKCCASENHAECLKQAPILLEAALKEIEELRKQNCGALQLLGFRDYNIQLLFRYFFKMPQVTAPTLVELAGRMTKVAVYCCGLAENKQQTCAEEKLDILLGEMCEKEKHTFVNDNVRHCCVDSYANRRKCFTDLQRYPNYVAPKWDESKLHFNEDLCKGSEDDQIKKKLEVLVEYMKMKPDCGPEKLKEVVEAFRKIDIKCCAAEDHQKCFDDEKAGLLQIIEAH.

2 consecutive Albumin domains span residues 1–178 and 179–377; these read KCRI…ILLE and AALK…GLLQ. 12 disulfides stabilise this stretch: Cys-2–Cys-48, Cys-47–Cys-55, Cys-67–Cys-81, Cys-80–Cys-91, Cys-116–Cys-161, Cys-160–Cys-169, Cys-192–Cys-238, Cys-237–Cys-248, Cys-261–Cys-277, Cys-276–Cys-287, Cys-314–Cys-359, and Cys-358–Cys-367. 2 residues coordinate Ca(2+): Asp-51 and Glu-54. Asp-51 is a binding site for Zn(2+).

Belongs to the ALB/AFP/VDB family. Plasma.

The protein resides in the secreted. Its function is as follows. Serum albumin, the main protein of plasma, has a good binding capacity for water, Ca(2+), Na(+), K(+), fatty acids, hormones, bilirubin and drugs. Its main function is the regulation of the colloidal osmotic pressure of blood. This chain is Albumin (ALB), found in Aquarana catesbeiana (American bullfrog).